The following is a 542-amino-acid chain: 4-coumarate--CoA ligase-like 1 (542 aa).

6 residues coordinate ATP: Ser189, Ser190, Gly191, Thr192, Thr193, and Lys197. Tyr237 lines the (E)-4-coumaroyl-AMP pocket. Arg258 contacts CoA. The segment at Asp260–Glu331 is SBD1. (E)-4-coumaroyl-AMP contacts are provided by Ala309, Glu331, Ala332, and Thr336. Residues Glu331, Ala332, Thr336, Asp420, and Arg435 each contribute to the ATP site. The segment at Ala332–Tyr399 is SBD2. Lys437 and Lys441 together coordinate (E)-4-coumaroyl-AMP. Positions 443 and 444 each coordinate CoA. Residue Lys526 participates in ATP binding.

This sequence belongs to the ATP-dependent AMP-binding enzyme family. Interacts with TKPR1, PKSA and PKSB. It depends on Mg(2+) as a cofactor. As to expression, mostly confined to anther tapetal cells.

The protein resides in the endoplasmic reticulum. The catalysed reaction is (E)-4-coumarate + ATP + CoA = (E)-4-coumaroyl-CoA + AMP + diphosphate. It carries out the reaction (E)-4-coumarate + ATP + H(+) = (E)-4-coumaroyl-AMP + diphosphate. The enzyme catalyses (E)-4-coumaroyl-AMP + CoA = (E)-4-coumaroyl-CoA + AMP + H(+). Carboxylate--CoA ligase that may use 4-coumarate as substrate. Follows a two-step reaction mechanism, wherein the carboxylate substrate first undergoes adenylation by ATP, followed by a thioesterification in the presence of CoA to yield the final CoA thioester. This Arabidopsis thaliana (Mouse-ear cress) protein is 4-coumarate--CoA ligase-like 1.